Here is a 509-residue protein sequence, read N- to C-terminus: Monofunctional riboflavin biosynthesis protein RIBA 3, chloroplastic (509 aa).

The transit peptide at 1-43 (MMDSALYHPRIFFAHSFINGLYSSPRFANTCWRLVSRSSWEIK) directs the protein to the chloroplast. Residues 44 to 302 (ASENSDRNVF…LTDLIRYRRK (259 aa)) form an inactive DHBP synthase region. D-ribulose 5-phosphate-binding positions include 125–126 (GD) and 240–244 (RAGHT). The tract at residues 303–509 (RDKLVERITV…ISDNNDQPLA (207 aa)) is GTP cyclohydrolase II. 353-357 (RVHSE) is a binding site for GTP. Zn(2+) contacts are provided by Cys-358, Cys-369, and Cys-371. GTP-binding positions include Gln-374, 397–399 (EGR), and Thr-419. The active-site Proton acceptor; for GTP cyclohydrolase activity is Asp-431. Catalysis depends on Arg-433, which acts as the Nucleophile; for GTP cyclohydrolase activity. Residues Thr-454 and Lys-459 each contribute to the GTP site.

The protein in the N-terminal section; belongs to the DHBP synthase family. In the C-terminal section; belongs to the GTP cyclohydrolase II family. Zn(2+) is required as a cofactor. Expressed in leaves, shoots, roots, flowers and siliques.

It localises to the plastid. Its subcellular location is the chloroplast. It catalyses the reaction GTP + 4 H2O = 2,5-diamino-6-hydroxy-4-(5-phosphoribosylamino)-pyrimidine + formate + 2 phosphate + 3 H(+). The protein operates within cofactor biosynthesis; riboflavin biosynthesis; 5-amino-6-(D-ribitylamino)uracil from GTP: step 1/4. Functionally, involved in riboflavin biosynthesis. Catalyzes the conversion of GTP to 2,5-diamino-6-ribosylamino-4(3H)-pyrimidinone 5'-phosphate (DARP), formate and pyrophosphate. RIBA2 and RIBA3 together are not able to complement the loss of function of RIBA1. The sequence is that of Monofunctional riboflavin biosynthesis protein RIBA 3, chloroplastic (RIBA3) from Arabidopsis thaliana (Mouse-ear cress).